The chain runs to 418 residues: Torsin-4A-B (418 aa).

The helical transmembrane segment at 128–144 threads the bilayer; sequence CLLLFVGIVCFQIFNAI. 200-207 provides a ligand contact to ATP; that stretch reads GPSGVGKS.

This sequence belongs to the ClpA/ClpB family. Torsin subfamily.

Its subcellular location is the membrane. The sequence is that of Torsin-4A-B (tor4a-b) from Xenopus laevis (African clawed frog).